Reading from the N-terminus, the 136-residue chain is Small ribosomal subunit protein uS11 (136 aa).

It belongs to the universal ribosomal protein uS11 family. In terms of assembly, part of the 30S ribosomal subunit. Interacts with proteins S7 and S18. Binds to IF-3.

In terms of biological role, located on the platform of the 30S subunit, it bridges several disparate RNA helices of the 16S rRNA. Forms part of the Shine-Dalgarno cleft in the 70S ribosome. This is Small ribosomal subunit protein uS11 from Leptospira borgpetersenii serovar Hardjo-bovis (strain JB197).